Reading from the N-terminus, the 473-residue chain is MTLTKQTCAKQACDCCRIRRVKCDGKRPCSSCLQNSLDCTYLQPSRKRGPKSIRLRSLKRIAEVQRESGPNTIATAPVIYKRVPKKLIDQCLRLYHDNLYVIWPLLSYDDLHKLLEEKYNDNYVYWFLTALSAATLSDLQTEIKSEEEVTFTGKQLSNLCISSCQQFDDLDNSNIFNIMTYYCLHRSFAQISNARTSYRLCCEAVGLITVAGLHREETYGSLTFEEQQLRRKLYYLLLMTERYYAIYLHCATSLDATIAPPQLELVTDPQLSMDSFLEMIRVFTVPGKCFFDALAADSTDASCTEESLKKIWNELHTTSSEIEPWSNGYIDISFSRHWIRILAWKLAYQMRGSNFSLNANNGQIPIEIARDMLIDTYLTPENLYDVHGPGVPVKTLEIATALVDIVGQYDHNMKLEAWNVLHDVCKFAFSLNHYNNDMLKRFSTKCQNALITLPISKPLQLDGYPKDNEDIDP.

Positions 13-39 (CDCCRIRRVKCDGKRPCSSCLQNSLDC) form a DNA-binding region, zn(2)-C6 fungal-type. Residues 46-54 (RKRGPKSIR) carry the Nuclear localization signal motif.

This sequence belongs to the MAL13 family.

The protein localises to the nucleus. Functionally, regulates the coordinate transcription of structural MAL1S (maltase) and AGT1 (maltose permease) genes. This is Maltose fermentation regulatory protein MAL13 (MAL13) from Saccharomyces cerevisiae (strain ATCC 204508 / S288c) (Baker's yeast).